The primary structure comprises 252 residues: 2-succinyl-6-hydroxy-2,4-cyclohexadiene-1-carboxylate synthase (252 aa).

Belongs to the AB hydrolase superfamily. MenH family. Monomer.

It carries out the reaction 5-enolpyruvoyl-6-hydroxy-2-succinyl-cyclohex-3-ene-1-carboxylate = (1R,6R)-6-hydroxy-2-succinyl-cyclohexa-2,4-diene-1-carboxylate + pyruvate. It functions in the pathway quinol/quinone metabolism; 1,4-dihydroxy-2-naphthoate biosynthesis; 1,4-dihydroxy-2-naphthoate from chorismate: step 3/7. The protein operates within quinol/quinone metabolism; menaquinone biosynthesis. Catalyzes a proton abstraction reaction that results in 2,5-elimination of pyruvate from 2-succinyl-5-enolpyruvyl-6-hydroxy-3-cyclohexene-1-carboxylate (SEPHCHC) and the formation of 2-succinyl-6-hydroxy-2,4-cyclohexadiene-1-carboxylate (SHCHC). The polypeptide is 2-succinyl-6-hydroxy-2,4-cyclohexadiene-1-carboxylate synthase (Escherichia coli (strain SE11)).